Consider the following 132-residue polypeptide: CLAVATA3/ESR (CLE)-related protein TDIF (132 aa).

The N-terminal stretch at 1-26 (MDIDLLWSFGGWFFILFPETINYCMA) is a signal peptide. The helical transmembrane segment at 42-62 (SCSSLFFVALLIITILITMLQ) threads the bilayer. The span at 68 to 77 (EVTSLPTHQP) shows a compositional bias: polar residues. The interval 68-132 (EVTSLPTHQP…PSGPNPISNR (65 aa)) is disordered. The segment covering 87-96 (STSSTATTTT) has biased composition (low complexity). Basic residues predominate over residues 101 to 111 (KRTHHQSHPKP). 2 positions are modified to hydroxyproline: Pro-123 and Pro-126. O-linked (Ara...) hydroxyproline glycosylation occurs at Pro-126.

The protein belongs to the CLV3/ESR signal peptide family. As to quaternary structure, interacts specifically with the leucine-rich repeat receptor-like protein kinase TDR. In terms of processing, the TDIFp peptide contains two hydroxprolines, but hydroxylation had no direct effect on TDIFp activity. Post-translationally, the O-glycosylation (arabinosylation) of the hydroxyproline Pro-126 enhances binding affinity of the TDIFp peptide for its receptor.

It localises to the secreted. Its subcellular location is the extracellular space. The protein resides in the cell membrane. In terms of biological role, extracellular signal peptide that regulates cell fate. Represses tracheary element differentiation but promotes the formation of procambial cells adjacent to phloem cells in the veins. This chain is CLAVATA3/ESR (CLE)-related protein TDIF, found in Zinnia elegans (Garden zinnia).